The following is a 305-amino-acid chain: MSKKLTFQEIILTLQQYWNDQGCMLMQAYDNEKGAGTMSPYTFLRAIGPEPWNAAYVEPSRRPADGRYGENPNRLYQHHQFQVVMKPSPSNIQELYLESLEKLGINPLEHDVRFVEDNWENPSTGSAGLGWEVWLDGMEITQFTYFQQVGGLATGPVTAEVTYGLERLASYIQEVDSVYDIEWAPGVKYGEIFLQPEYEHSKYSFEVSDQDMLLENFEKFEKEAGRALELGLVHPAYDYVLKCSHTFNLLDARGAVSVTERAGYIARIRNLARVVAKTFVAERKKLGYPLLDEATRKKLLAEEEE.

The protein belongs to the class-II aminoacyl-tRNA synthetase family. In terms of assembly, tetramer of two alpha and two beta subunits.

The protein resides in the cytoplasm. The catalysed reaction is tRNA(Gly) + glycine + ATP = glycyl-tRNA(Gly) + AMP + diphosphate. The protein is Glycine--tRNA ligase alpha subunit of Streptococcus thermophilus (strain CNRZ 1066).